The chain runs to 314 residues: GDSL-like esterase Rv1075c (314 aa).

The N-terminal stretch at 1 to 21 (MPRRSTIALATAGALASTGTA) is a signal peptide. Residue Ser-80 is the Nucleophile of the active site. The Proton donor role is filled by Asp-244. Catalysis depends on His-247, which acts as the Proton acceptor. The segment at 276-314 (IHETPSRPGTATLEPGHTRHSMMSRLRRPRPARAVPTGG) is disordered. Residues 293-306 (TRHSMMSRLRRPRP) show a composition bias toward basic residues.

It belongs to the 'GDSL' lipolytic enzyme family.

The enzyme catalyses an acetyl ester + H2O = an aliphatic alcohol + acetate + H(+). It catalyses the reaction a butanoate ester + H2O = an aliphatic alcohol + butanoate + H(+). The catalysed reaction is triacetin + H2O = diacetylglycerol + acetate + H(+). It carries out the reaction 1,2,3-tributanoylglycerol + H2O = dibutanoylglycerol + butanoate + H(+). Its activity is regulated as follows. Esterase activity is significantly inhibited by the serine modifier phenylmethylsulfonyl fluoride (PMSF). Completely inhibited by diethyl pyrocarbonate. Esterase that preferentially hydrolyzes short-chain fatty acids, particularly pNP-acetate (C2) and pNP-butyrate (C4). Also has weak activity with pNP-hexanoate (C6) and pNP-octanoate (C8). It can also hydrolyze short-chain tryglycerides such as triacetin and tributyrin. Important for intracellular survival. The polypeptide is GDSL-like esterase Rv1075c (Mycobacterium tuberculosis (strain ATCC 25618 / H37Rv)).